The sequence spans 368 residues: Alanine racemase (368 aa).

The Proton acceptor; specific for D-alanine role is filled by K40. An N6-(pyridoxal phosphate)lysine modification is found at K40. R134 contributes to the substrate binding site. Catalysis depends on Y263, which acts as the Proton acceptor; specific for L-alanine. M310 provides a ligand contact to substrate.

It belongs to the alanine racemase family. Requires pyridoxal 5'-phosphate as cofactor.

The enzyme catalyses L-alanine = D-alanine. It functions in the pathway amino-acid biosynthesis; D-alanine biosynthesis; D-alanine from L-alanine: step 1/1. Catalyzes the interconversion of L-alanine and D-alanine. May also act on other amino acids. This Listeria monocytogenes serotype 4b (strain F2365) protein is Alanine racemase (alr).